Consider the following 98-residue polypeptide: Large ribosomal subunit protein uL23 (98 aa).

Belongs to the universal ribosomal protein uL23 family. In terms of assembly, part of the 50S ribosomal subunit. Contacts protein L29, and trigger factor when it is bound to the ribosome.

In terms of biological role, one of the early assembly proteins it binds 23S rRNA. One of the proteins that surrounds the polypeptide exit tunnel on the outside of the ribosome. Forms the main docking site for trigger factor binding to the ribosome. The protein is Large ribosomal subunit protein uL23 of Bordetella bronchiseptica (strain ATCC BAA-588 / NCTC 13252 / RB50) (Alcaligenes bronchisepticus).